The sequence spans 584 residues: MNLKEQVDLLTNKPGCYLFLNKDNEVIYVGKAKNLKKRVSTYFNKAYNIKTTRLIREITHLKYFIVDNEKESLLLEKNLIKKYRPKYNVLLNDDKTYPYIIITNQKDPMYKYVRKYEKKALRNYGPLPIGSNARSILLTLQRLFPLRMCKGDLKKPCLYYHLNQCSGACFKTVDSSYYEYQIKQVDKFFKGEINQVKQTLVKQMQKASDNLQFEQAKRIKDQITSLDFITAKQNVDIVTNKNIDVVNYEINEEKICFVMLFYRLGQLTYKDEYIQNYEGQDLDELLNSYLQQIYQKNLYPDVLLIPNEIDLLDLDENLLEFSSYSFNNQDDIFIKLAKQNAVDSLNKSILSNNVNSGDELEILDQLQQISNINKYPKRIEIFDISNIYNQFITGACIVYINAKPVRNEFRKYNIDSQYTSDYARMKFMLEKRFLKRIKEKEQLPDLIIVDGGIIQIHAAKEVLNKLNLKINVIGLSKDNNHKTRYLIDIFEQTIDIKNFKKLYNFLTSLQIRVDEYAKSGFRKKYHNQLNDQILLIKGVGKKTNLKLYKHFKTIDNIKNASFDELNKIINNKKITNLIISNFKK.

The 78-residue stretch at 12–89 (NKPGCYLFLN…IKKYRPKYNV (78 aa)) folds into the GIY-YIG domain. The UVR domain occupies 194 to 229 (NQVKQTLVKQMQKASDNLQFEQAKRIKDQITSLDFI).

Belongs to the UvrC family. As to quaternary structure, interacts with UvrB in an incision complex.

Its subcellular location is the cytoplasm. Its function is as follows. The UvrABC repair system catalyzes the recognition and processing of DNA lesions. UvrC both incises the 5' and 3' sides of the lesion. The N-terminal half is responsible for the 3' incision and the C-terminal half is responsible for the 5' incision. The polypeptide is UvrABC system protein C (Mycoplasma capricolum subsp. capricolum (strain California kid / ATCC 27343 / NCTC 10154)).